The chain runs to 479 residues: Zinc finger and SCAN domain-containing protein 26 (479 aa).

Lys17 participates in a covalent cross-link: Glycyl lysine isopeptide (Lys-Gly) (interchain with G-Cter in SUMO2). The 83-residue stretch at 51 to 133 (CKRFRQLRYE…VFLEDLQLEL (83 aa)) folds into the SCAN box domain. Residues 155-187 (TAPGKATPERQVQPEGDVPQPEREKGEAKRIEN) form a disordered region. Over residues 174–187 (QPEREKGEAKRIEN) the composition is skewed to basic and acidic residues. A C2H2-type 1; degenerate zinc finger spans residues 232-254 (CKCSEYGQAFFQHSDLIKHESSH). 7 consecutive C2H2-type zinc fingers follow at residues 283 to 305 (HQCHECGKAFQRSSHLVRHQKIH), 311 to 333 (YQCKECGKVFSQNAGLLEHLRIH), 339 to 361 (YLCIHCGKNFRRSSHLNRHQRIH), 367 to 389 (CQCKECGKTFSQALLLTHHQRIH), 395 to 417 (HQCNECGKTFSLTSDLIRHHRIH), 423 to 445 (FKCTICQKAFRLNSHLAQHVRIH), and 451 to 473 (YKCNECGEAFRQRSGLFQHQRYH).

It localises to the nucleus. May be involved in transcriptional regulation. The chain is Zinc finger and SCAN domain-containing protein 26 (ZSCAN26) from Bos taurus (Bovine).